The following is a 338-amino-acid chain: Structural protein VP9 (338 aa).

The protein resides in the virion. Its function is as follows. Plays an important role in virus transmission by the insect vector. May participate in the virus stability by binding clamp proteins and surrounding the pentameric turrets present in the virion. The polypeptide is Structural protein VP9 (Rice ragged stunt virus (isolate Thailand) (RRSV)).